The primary structure comprises 422 residues: Histidine--tRNA ligase (422 aa).

Belongs to the class-II aminoacyl-tRNA synthetase family. In terms of assembly, homodimer.

It localises to the cytoplasm. It catalyses the reaction tRNA(His) + L-histidine + ATP = L-histidyl-tRNA(His) + AMP + diphosphate + H(+). The sequence is that of Histidine--tRNA ligase from Lysinibacillus sphaericus (strain C3-41).